A 226-amino-acid polypeptide reads, in one-letter code: PKHD-type hydroxylase PSPA7_5129 (226 aa).

Residues 78-178 (KVFPPLFNCY…RYASFFWTQS (101 aa)) enclose the Fe2OG dioxygenase domain. Positions 96, 98, and 159 each coordinate Fe cation. R169 is a binding site for 2-oxoglutarate.

It depends on Fe(2+) as a cofactor. Requires L-ascorbate as cofactor.

The sequence is that of PKHD-type hydroxylase PSPA7_5129 from Pseudomonas paraeruginosa (strain DSM 24068 / PA7) (Pseudomonas aeruginosa (strain PA7)).